Consider the following 369-residue polypeptide: GTPase Obg (369 aa).

The Obg domain occupies 1-159 (MKFIDEAKIE…RELRLELKVL (159 aa)). The interval 128 to 148 (IHFKSSTNRAPRQKSEGKEGE) is disordered. The OBG-type G domain maps to 160–333 (ADIGLLGMPN…LVTEIYDYIA (174 aa)). GTP is bound by residues 166–173 (GMPNAGKS), 191–195 (FTTLH), 213–216 (DIPG), 283–286 (NKLD), and 314–316 (SAL). S173 and T193 together coordinate Mg(2+).

Belongs to the TRAFAC class OBG-HflX-like GTPase superfamily. OBG GTPase family. In terms of assembly, monomer. Requires Mg(2+) as cofactor.

The protein resides in the cytoplasm. Its function is as follows. An essential GTPase which binds GTP, GDP and possibly (p)ppGpp with moderate affinity, with high nucleotide exchange rates and a fairly low GTP hydrolysis rate. Plays a role in control of the cell cycle, stress response, ribosome biogenesis and in those bacteria that undergo differentiation, in morphogenesis control. The sequence is that of GTPase Obg from Herminiimonas arsenicoxydans.